Consider the following 459-residue polypeptide: Exodeoxyribonuclease 7 large subunit (459 aa).

This sequence belongs to the XseA family. As to quaternary structure, heterooligomer composed of large and small subunits.

It is found in the cytoplasm. The catalysed reaction is Exonucleolytic cleavage in either 5'- to 3'- or 3'- to 5'-direction to yield nucleoside 5'-phosphates.. Its function is as follows. Bidirectionally degrades single-stranded DNA into large acid-insoluble oligonucleotides, which are then degraded further into small acid-soluble oligonucleotides. In Pseudomonas aeruginosa (strain LESB58), this protein is Exodeoxyribonuclease 7 large subunit.